Here is a 61-residue protein sequence, read N- to C-terminus: Insect toxin BsIT3 (61 aa).

Residues 1-61 form the LCN-type CS-alpha/beta domain; it reads DGYILNSKGC…RWTSSKNKCN (61 aa). Intrachain disulfides connect Cys10-Cys60, Cys14-Cys35, Cys21-Cys42, and Cys25-Cys44.

The protein belongs to the long (4 C-C) scorpion toxin superfamily. Sodium channel inhibitor family. Beta subfamily. Expressed by the venom gland.

The protein localises to the secreted. Functionally, depressant insect beta-toxins cause a transient contraction paralysis followed by a slow flaccid paralysis. They bind voltage-independently at site-4 of sodium channels (Nav) and shift the voltage of activation toward more negative potentials thereby affecting sodium channel activation and promoting spontaneous and repetitive firing. This toxin is active only on insects. This chain is Insect toxin BsIT3, found in Hottentotta tamulus sindicus (Scorpion).